A 314-amino-acid chain; its full sequence is DNA-directed RNA polymerase subunit alpha (314 aa).

The alpha N-terminal domain (alpha-NTD) stretch occupies residues 1 to 227 (MTKFEIECVE…ELLHPLKEIN (227 aa)). Residues 241–314 (KINQILIEEL…LPKEKTVKPN (74 aa)) are alpha C-terminal domain (alpha-CTD).

Belongs to the RNA polymerase alpha chain family. As to quaternary structure, in plastids the minimal PEP RNA polymerase catalytic core is composed of four subunits: alpha, beta, beta', and beta''. When a (nuclear-encoded) sigma factor is associated with the core the holoenzyme is formed, which can initiate transcription.

It is found in the plastid. The protein resides in the chloroplast. It catalyses the reaction RNA(n) + a ribonucleoside 5'-triphosphate = RNA(n+1) + diphosphate. Its function is as follows. DNA-dependent RNA polymerase catalyzes the transcription of DNA into RNA using the four ribonucleoside triphosphates as substrates. This is DNA-directed RNA polymerase subunit alpha from Rhodomonas salina (Cryptomonas salina).